The following is a 137-amino-acid chain: SPbeta prophage-derived uncharacterized protein YoqU (137 aa).

This is SPbeta prophage-derived uncharacterized protein YoqU (yoqU) from Bacillus subtilis (strain 168).